We begin with the raw amino-acid sequence, 318 residues long: Methionyl-tRNA formyltransferase (318 aa).

Position 110–113 (110–113 (SLLP)) interacts with (6S)-5,6,7,8-tetrahydrofolate.

Belongs to the Fmt family.

The catalysed reaction is L-methionyl-tRNA(fMet) + (6R)-10-formyltetrahydrofolate = N-formyl-L-methionyl-tRNA(fMet) + (6S)-5,6,7,8-tetrahydrofolate + H(+). In terms of biological role, attaches a formyl group to the free amino group of methionyl-tRNA(fMet). The formyl group appears to play a dual role in the initiator identity of N-formylmethionyl-tRNA by promoting its recognition by IF2 and preventing the misappropriation of this tRNA by the elongation apparatus. The sequence is that of Methionyl-tRNA formyltransferase from Geobacillus sp. (strain WCH70).